The chain runs to 263 residues: uncharacterized protein (263 aa).

31 to 38 (GPTGSGKT) serves as a coordination point for ATP.

Belongs to the CbbQ/NirQ/NorQ/GpvN family.

This is an uncharacterized protein from Staphylococcus saprophyticus subsp. saprophyticus (strain ATCC 15305 / DSM 20229 / NCIMB 8711 / NCTC 7292 / S-41).